The sequence spans 253 residues: Ribosomal RNA small subunit methyltransferase J (253 aa).

Residues 123-124 (ER) and Asp176 each bind S-adenosyl-L-methionine.

This sequence belongs to the methyltransferase superfamily. RsmJ family.

Its subcellular location is the cytoplasm. The enzyme catalyses guanosine(1516) in 16S rRNA + S-adenosyl-L-methionine = N(2)-methylguanosine(1516) in 16S rRNA + S-adenosyl-L-homocysteine + H(+). Specifically methylates the guanosine in position 1516 of 16S rRNA. This is Ribosomal RNA small subunit methyltransferase J from Magnetococcus marinus (strain ATCC BAA-1437 / JCM 17883 / MC-1).